Here is a 474-residue protein sequence, read N- to C-terminus: Adenylyl cyclase-associated protein 1 (474 aa).

Ala2 carries the post-translational modification N-acetylalanine. Tyr31 carries the phosphotyrosine modification. Ser34 carries the phosphoserine modification. At Lys80 the chain carries N6-acetyllysine. Disordered stretches follow at residues 215–253 (ELSG…SASR) and 277–316 (MKTH…ATKK). The span at 217–227 (SGLPSGPSVGS) shows a compositional bias: low complexity. The segment covering 228–241 (GPPPPPPGPPPPPI) has biased composition (pro residues). Residue Lys286 is modified to N6-methyllysine. Phosphoserine is present on residues Ser289, Ser294, and Ser300. A compositionally biased stretch (pro residues) spans 299–311 (FSAPKPQTSPSPK). Phosphothreonine is present on Thr306. Phosphoserine is present on residues Ser307 and Ser309. In terms of domain architecture, C-CAP/cofactor C-like spans 312-452 (PATKKEPALL…EGGDFNEFPV (141 aa)). A Glycyl lysine isopeptide (Lys-Gly) (interchain with G-Cter in SUMO1) cross-link involves residue Lys347.

This sequence belongs to the CAP family. In terms of assembly, homodimer. Binds actin monomers. In terms of tissue distribution, ubiquitous.

It localises to the cell membrane. Functionally, directly regulates filament dynamics and has been implicated in a number of complex developmental and morphological processes, including mRNA localization and the establishment of cell polarity. This Mus musculus (Mouse) protein is Adenylyl cyclase-associated protein 1 (Cap1).